We begin with the raw amino-acid sequence, 394 residues long: Phosphoglycerate kinase (394 aa).

Substrate is bound by residues 21-23 (DLN), Arg37, 60-63 (HLGR), Arg115, and Arg148. ATP is bound by residues Lys199, Glu321, and 347 to 350 (GGDT).

The protein belongs to the phosphoglycerate kinase family. As to quaternary structure, monomer.

Its subcellular location is the cytoplasm. The catalysed reaction is (2R)-3-phosphoglycerate + ATP = (2R)-3-phospho-glyceroyl phosphate + ADP. It participates in carbohydrate degradation; glycolysis; pyruvate from D-glyceraldehyde 3-phosphate: step 2/5. In Aromatoleum aromaticum (strain DSM 19018 / LMG 30748 / EbN1) (Azoarcus sp. (strain EbN1)), this protein is Phosphoglycerate kinase.